The primary structure comprises 1036 residues: Hexagonally packed intermediate-layer surface protein (1036 aa).

The first 17 residues, 1 to 17, serve as a signal peptide directing secretion; sequence MKKNIALMALTGVLTLA. 3 disulfides stabilise this stretch: C74–C86, C256–C275, and C642–C754.

Post-translationally, glycosylated; contains six glycans. Acylated in the N-terminal region. In terms of processing, the N-terminus is blocked.

Its subcellular location is the secreted. It localises to the cell wall. The protein resides in the S-layer. In terms of biological role, shape maintenance, possible protection from noxious enzymes or exogenous and unsettling DNA, and may mediate homotypic cell-cell contacts. This is Hexagonally packed intermediate-layer surface protein (hpi) from Deinococcus radiodurans.